The following is a 478-amino-acid chain: Septin-4 (478 aa).

Disordered stretches follow at residues 40 to 74 and 87 to 115; these read DFSG…LYDD and ADNQ…LDPY. Residues 95 to 108 are compositionally biased toward low complexity; that stretch reads APAPLSPSARPRSP. Residues Ser-117 and Ser-118 each carry the phosphoserine modification. A Septin-type G domain is found at 141-414; the sequence is KGFDFTLMVA…ENYRAQCIQS (274 aa). Residues 151 to 158 form a G1 motif region; the sequence is GESGLGKS. Residues 151–158 and Thr-185 each bind GTP; that span reads GESGLGKS. The tract at residues 208–211 is G3 motif; it reads DTPG. The G4 motif stretch occupies residues 289–292; the sequence is AKAD. Residue 290–298 coordinates GTP; it reads KADTLTPPE. Residue Ser-325 is modified to Phosphoserine. Gly-348 and Arg-363 together coordinate GTP. Residues 428–448 are disordered; the sequence is LTRESGTDFPIPAVPPGTDPE. Position 432 is a phosphoserine (Ser-432). Position 434 is a phosphothreonine (Thr-434). Positions 446 to 478 form a coiled coil; sequence DPETEKLIREKDEELRRMQEILHKIQKQMKETY.

It belongs to the TRAFAC class TrmE-Era-EngA-EngB-Septin-like GTPase superfamily. Septin GTPase family. In terms of assembly, septins polymerize into heterooligomeric protein complexes that form filaments, and can associate with cellular membranes, actin filaments and microtubules. GTPase activity is required for filament formation. Interacts with SEPTIN8. Component of a septin core octameric complex consisting of SEPTIN12, SEPTIN7, SEPTIN6 and SEPTIN2 or SEPTIN4 in the order 12-7-6-2-2-6-7-12 or 12-7-6-4-4-6-7-12. Interacts with SEPTIN14 (via C-terminus). Interacts with DYRK1A. Interacts with SLC6A3/DAT and SNCA/alpha-synuclein. Interacts with STX1A; in the striatum. Interacts with XIAP (via BIR3 domain) following the induction of apoptosis. Interacts with AREL1 (via HECT domain); in the cytoplasm following induction of apoptosis. Post-translationally, ubiquitinated by AREL1. In terms of processing, phosphorylated by DYRK1A.

Its subcellular location is the cytoplasm. The protein resides in the cell projection. The protein localises to the cilium. It is found in the flagellum. It localises to the cytoplasmic vesicle. Its subcellular location is the secretory vesicle. The protein resides in the axon. The protein localises to the dendrite. It is found in the perikaryon. It localises to the synapse. Its function is as follows. Filament-forming cytoskeletal GTPase. Pro-apoptotic protein involved in LGR5-positive intestinal stem cell and Paneth cell expansion in the intestines, via its interaction with XIAP. May also play a role in the regulation of cell fate in the intestine. Positive regulator of apoptosis involved in hematopoietic stem cell homeostasis; via its interaction with XIAP. Negative regulator of repair and hair follicle regeneration in response to injury, due to inhibition of hair follicle stem cell proliferation, potentially via its interaction with XIAP. Plays an important role in male fertility and sperm motility. During spermiogenesis, essential for the establishment of the annulus (a fibrous ring structure connecting the midpiece and the principal piece of the sperm flagellum) which is a requisite for the structural and mechanical integrity of the sperm. Involved in the migration of cortical neurons and the formation of neuron leading processes during embryonic development. Required for dopaminergic metabolism in presynaptic autoreceptors; potentially via activity as a presynaptic scaffold protein. The polypeptide is Septin-4 (Macaca fascicularis (Crab-eating macaque)).